We begin with the raw amino-acid sequence, 370 residues long: Cysteine-type anaerobic sulfatase-maturating enzyme (370 aa).

Residues 1–227 enclose the Radical SAM core domain; it reads MPPLSLLIKP…LKNLFDLWYE (227 aa). 2 residues coordinate [4Fe-4S] cluster: cysteine 15 and cysteine 19. Tyrosine 21 provides a ligand contact to S-adenosyl-L-methionine. Cysteine 22 contributes to the [4Fe-4S] cluster binding site. 4 residues coordinate S-adenosyl-L-methionine: glycine 66, serine 122, arginine 134, and leucine 195. The [4Fe-4S] cluster site is built by cysteine 255, cysteine 261, and cysteine 276. Aspartate 277 acts as the Proton acceptor in catalysis. [4Fe-4S] cluster-binding residues include cysteine 317, cysteine 320, cysteine 326, cysteine 330, and cysteine 348.

Belongs to the radical SAM superfamily. Anaerobic sulfatase-maturating enzyme family. The cofactor is [4Fe-4S] cluster.

It catalyses the reaction L-cysteinyl-[sulfatase] + S-adenosyl-L-methionine + H2O = 3-oxo-L-alanyl-[sulfatase] + hydrogen sulfide + 5'-deoxyadenosine + L-methionine + 2 H(+). The protein operates within protein modification; sulfatase oxidation. Functionally, involved in 'Cys-type' sulfatase maturation under anaerobic conditions. Catalyzes the post-translational modification of cysteine into 3-oxoalanine (also known as C(alpha)-formylglycine (FGly)), by a free radical chemical mechanism initiated via the reductive cleavage of S-adenosyl-L-methionine (SAM). The sequence is that of Cysteine-type anaerobic sulfatase-maturating enzyme from Clostridium perfringens (strain 13 / Type A).